Here is a 253-residue protein sequence, read N- to C-terminus: 5'/3'-nucleotidase SurE (253 aa).

Positions 8, 9, 39, and 92 each coordinate a divalent metal cation.

This sequence belongs to the SurE nucleotidase family. A divalent metal cation is required as a cofactor.

The protein resides in the cytoplasm. It carries out the reaction a ribonucleoside 5'-phosphate + H2O = a ribonucleoside + phosphate. The catalysed reaction is a ribonucleoside 3'-phosphate + H2O = a ribonucleoside + phosphate. The enzyme catalyses [phosphate](n) + H2O = [phosphate](n-1) + phosphate + H(+). In terms of biological role, nucleotidase with a broad substrate specificity as it can dephosphorylate various ribo- and deoxyribonucleoside 5'-monophosphates and ribonucleoside 3'-monophosphates with highest affinity to 3'-AMP. Also hydrolyzes polyphosphate (exopolyphosphatase activity) with the preference for short-chain-length substrates (P20-25). Might be involved in the regulation of dNTP and NTP pools, and in the turnover of 3'-mononucleotides produced by numerous intracellular RNases (T1, T2, and F) during the degradation of various RNAs. The polypeptide is 5'/3'-nucleotidase SurE (Erwinia tasmaniensis (strain DSM 17950 / CFBP 7177 / CIP 109463 / NCPPB 4357 / Et1/99)).